The sequence spans 898 residues: Chaperone protein ClpB 1 (898 aa).

The region spanning 6-148 is the Clp R domain; that stretch reads PTKFTEQAWD…ELAIKAIRGS (143 aa). Repeat stretches follow at residues 9 to 74 and 85 to 148; these read FTEQ…TNRQ and LGRS…IRGS. The segment at 161-344 is NBD1; that stretch reads EALDKYGRDL…RRFQQVYVKQ (184 aa). 208–215 serves as a coordination point for ATP; it reads GEPGVGKT. The linker stretch occupies residues 345-560; that stretch reads PSVDDTISIL…IAEIVAGWTG (216 aa). Residues 395-536 adopt a coiled-coil conformation; the sequence is IDLVDEAAAR…KESKLLEIQG (142 aa). The segment at 570-781 is NBD2; the sequence is ERQKLLQLEG…RIDDLIIFHT (212 aa). 620-627 lines the ATP pocket; sequence GPTGVGKT. The interval 782–898 is C-terminal; the sequence is LKRDELRRIV…TAVEVEVLSS (117 aa).

It belongs to the ClpA/ClpB family. In terms of assembly, homohexamer. The oligomerization is ATP-dependent.

It localises to the cytoplasm. Part of a stress-induced multi-chaperone system, it is involved in the recovery of the cell from heat-induced damage, in cooperation with DnaK, DnaJ and GrpE. Acts before DnaK, in the processing of protein aggregates. Protein binding stimulates the ATPase activity; ATP hydrolysis unfolds the denatured protein aggregates, which probably helps expose new hydrophobic binding sites on the surface of ClpB-bound aggregates, contributing to the solubilization and refolding of denatured protein aggregates by DnaK. In Synechocystis sp. (strain ATCC 27184 / PCC 6803 / Kazusa), this protein is Chaperone protein ClpB 1 (clpB1).